Reading from the N-terminus, the 1740-residue chain is SH3 and multiple ankyrin repeat domains protein 3 (1740 aa).

The tract at residues 1–75 (MDGPGASAVV…KFLDEERLLQ (75 aa)) is intramolecular interaction with the ANK repeats. A Phosphotyrosine modification is found at Tyr-122. ANK repeat units lie at residues 148-181 (SGECPLSLAAQLDNATDLLKVLRNGGAHLDFRTR), 182-214 (DGLTAVHCATRQRNAGALTTLLDLGASPDYKDS), 215-245 (RGLTPLYHSALGGGDALCCELLLHDHAQLGT), 249-278 (NGWQEIHQACRFGHVQHLEHLLFYGANMGA), 282-311 (SGNTALHICALYNQESCARVLLFRGANKDV), and 315-345 (NSQTAFQVAIIAGNFELAEVIKTHKDSDVVP). The tract at residues 354–466 (KRRRLAGPSG…PPPRGPKRKL (113 aa)) is disordered. Ser-373, Ser-375, Ser-387, and Ser-394 each carry phosphoserine. Residues 404–415 (LQEEKDRDRDGE) show a composition bias toward basic and acidic residues. The segment covering 444 to 460 (APGPGPASPAPPAPPPR) has biased composition (pro residues). In terms of domain architecture, SH3 spans 470 to 529 (VPGRKFIAVKAHSPQGEGEIPLHRGEAVKVLSIGEGGFWEGTVKGRTGWFPADCVEEVQM). A Phosphoserine modification is found at Ser-482. Tyr-555 is subject to Phosphotyrosine. One can recognise a PDZ domain in the interval 570 to 664 (VAILQKRDHE…RLVMKVVSVT (95 aa)). The segment at 664-687 (TRKPEEDSARRRAPPPPKRAPSTT) is disordered. Residues 677–684 (PPPPKRAP) are required for interaction with ABI1. 4 positions are modified to phosphoserine: Ser-694, Ser-781, Ser-790, and Ser-801. 5 disordered regions span residues 759-855 (RQGL…RSSF), 868-1053 (AGLY…QPSR), 1115-1199 (AARE…MILS), 1211-1463 (LIVV…GPAR), and 1476-1518 (GDPV…EPVG). Pro residues predominate over residues 812-845 (IPPPPQTAPPPPPAPYYFDSGPPPTFSPPPPPPG). Phosphoserine is present on residues Ser-891 and Ser-898. The residue at position 913 (Thr-913) is a Phosphothreonine. Tyr-931 is modified (phosphotyrosine). At Arg-966 the chain carries Asymmetric dimethylarginine. Over residues 1017 to 1027 (VKERRLEERRR) the composition is skewed to basic and acidic residues. A compositionally biased stretch (polar residues) spans 1123 to 1132 (SQTPSRSPTP). Thr-1131 carries the phosphothreonine modification. A phosphoserine mark is found at Ser-1135, Ser-1160, Ser-1164, and Ser-1167. Residues 1175–1195 (ARREAEKPTREERKSPEDKKS) show a composition bias toward basic and acidic residues. Phosphothreonine is present on Thr-1235. Composition is skewed to pro residues over residues 1252-1262 (MPSPRAQPPGS) and 1322-1334 (TPPPGPGPLPTTV). Ser-1254 carries the post-translational modification Phosphoserine. Positions 1335–1344 (PSPASGKPSS) are enriched in low complexity. Basic and acidic residues predominate over residues 1361-1371 (ADTRSSSDPHL). The span at 1372 to 1393 (ETTSTISTVSSMSTLSSESGEL) shows a compositional bias: low complexity. The short motif at 1411–1417 (PPVPPKP) is the SH3-binding element. Residue Ser-1421 is modified to Phosphoserine. The stretch at 1495–1515 (ISELSSRLQQLNKDTRSLGEE) forms a coiled coil. A compositionally biased stretch (polar residues) spans 1496–1506 (SELSSRLQQLN). Ser-1511, Ser-1522, Ser-1530, and Ser-1549 each carry phosphoserine. Disordered regions lie at residues 1556 to 1594 (ISAQRSPGGPGGGASYSVRPSGRYPVARRAPSPVKPASL) and 1637 to 1673 (VRSVSARSRSPSPSPLPSPSPGSGPSAGPRRPFQQKP). The segment covering 1637 to 1647 (VRSVSARSRSP) has biased composition (low complexity). Ser-1644, Ser-1646, and Ser-1648 each carry phosphoserine. Pro residues predominate over residues 1648–1658 (SPSPLPSPSPG). Positions 1659–1668 (SGPSAGPRRP) are enriched in low complexity. One can recognise an SAM domain in the interval 1677 to 1740 (WSKFDVGDWL…ERALRQLDGS (64 aa)).

Belongs to the SHANK family. In terms of assembly, may homomultimerize via its SAM domain. Interacts with BAIAP2, DBNL and SLC17A7/VGLUT1. Interacts with DLGAP1/GKAP, GRM1/MGLUR1, GRM5/MGLUR5 and LZTS3 C-termini via its PDZ domain. Interacts with ABI1, HOMER1, HOMER2, HOMER3 and CTTN/cortactin SH3 domain. Is part of a complex with DLG4/PSD-95 and DLGAP1/GKAP. Interacts (via PDZ domain) with the GRIA1 subunit of the AMPA receptor (via PDZ-binding motif). Interacts with WASF1 and CYFIP2; the interactions mediate the association of SHANK3 with the WAVE1 complex. Interacts with ARPC2; the interaction probably mediates the association of SHANK3 with the Arp2/3 complex. Interacts (via ANK repeats) with SHARPIN and SPTAN1. Interacts (via PDZ domain) with ARHGAP44 (probably via PDZ-binding motif); the interaction takes place in dendritic spines and promotes GRIA1 exocytosis. Interacts with CAMK2A. Interacts with DIP2A. Interacts with ADGRL3. In terms of tissue distribution, widely expressed in brain (at protein level).

It is found in the cytoplasm. Its subcellular location is the postsynaptic density. The protein localises to the cell projection. The protein resides in the dendritic spine. Functionally, major scaffold postsynaptic density protein which interacts with multiple proteins and complexes to orchestrate the dendritic spine and synapse formation, maturation and maintenance. Interconnects receptors of the postsynaptic membrane including NMDA-type and metabotropic glutamate receptors via complexes with GKAP/PSD-95 and HOMER, respectively, and the actin-based cytoskeleton. Plays a role in the structural and functional organization of the dendritic spine and synaptic junction through the interaction with Arp2/3 and WAVE1 complex as well as the promotion of the F-actin clusters. By way of this control of actin dynamics, participates in the regulation of developing neurons growth cone motility and the NMDA receptor-signaling. Also modulates GRIA1 exocytosis and GRM5/MGLUR5 expression and signaling to control the AMPA and metabotropic glutamate receptor-mediated synaptic transmission and plasticity. May be required at an early stage of synapse formation and be inhibited by IGF1 to promote synapse maturation. This Rattus norvegicus (Rat) protein is SH3 and multiple ankyrin repeat domains protein 3 (Shank3).